Here is a 235-residue protein sequence, read N- to C-terminus: Ubiquinone/menaquinone biosynthesis C-methyltransferase UbiE (235 aa).

Residues Thr-59, Asp-84, and Ser-123 each coordinate S-adenosyl-L-methionine.

Belongs to the class I-like SAM-binding methyltransferase superfamily. MenG/UbiE family.

The catalysed reaction is a 2-demethylmenaquinol + S-adenosyl-L-methionine = a menaquinol + S-adenosyl-L-homocysteine + H(+). The enzyme catalyses a 2-methoxy-6-(all-trans-polyprenyl)benzene-1,4-diol + S-adenosyl-L-methionine = a 5-methoxy-2-methyl-3-(all-trans-polyprenyl)benzene-1,4-diol + S-adenosyl-L-homocysteine + H(+). The protein operates within quinol/quinone metabolism; menaquinone biosynthesis; menaquinol from 1,4-dihydroxy-2-naphthoate: step 2/2. It participates in cofactor biosynthesis; ubiquinone biosynthesis. In terms of biological role, methyltransferase required for the conversion of demethylmenaquinol (DMKH2) to menaquinol (MKH2) and the conversion of 2-polyprenyl-6-methoxy-1,4-benzoquinol (DDMQH2) to 2-polyprenyl-3-methyl-6-methoxy-1,4-benzoquinol (DMQH2). In Campylobacter jejuni subsp. jejuni serotype O:6 (strain 81116 / NCTC 11828), this protein is Ubiquinone/menaquinone biosynthesis C-methyltransferase UbiE.